Consider the following 159-residue polypeptide: Cytochrome c-type biogenesis protein CcmE (159 aa).

The Cytoplasmic portion of the chain corresponds to 1 to 7; sequence MTPRQRR. Residues 8–28 form a helical; Signal-anchor for type II membrane protein membrane-spanning segment; the sequence is LGMLLAALACAGIALALVLNA. Topologically, residues 29-159 are periplasmic; it reads FRSNLVFFFS…LAEGERETQR (131 aa). The heme site is built by H123 and Y127.

Belongs to the CcmE/CycJ family.

The protein resides in the cell inner membrane. Its function is as follows. Heme chaperone required for the biogenesis of c-type cytochromes. Transiently binds heme delivered by CcmC and transfers the heme to apo-cytochromes in a process facilitated by CcmF and CcmH. The chain is Cytochrome c-type biogenesis protein CcmE from Cupriavidus pinatubonensis (strain JMP 134 / LMG 1197) (Cupriavidus necator (strain JMP 134)).